A 119-amino-acid polypeptide reads, in one-letter code: Large ribosomal subunit protein bL20c (119 aa).

It belongs to the bacterial ribosomal protein bL20 family.

It is found in the plastid. It localises to the chloroplast. Functionally, binds directly to 23S ribosomal RNA and is necessary for the in vitro assembly process of the 50S ribosomal subunit. It is not involved in the protein synthesizing functions of that subunit. The sequence is that of Large ribosomal subunit protein bL20c from Saccharum officinarum (Sugarcane).